The primary structure comprises 200 residues: Superoxide dismutase [Mn] 1 (200 aa).

Residues histidine 29, histidine 76, aspartate 158, and histidine 162 each coordinate Mn(2+).

The protein belongs to the iron/manganese superoxide dismutase family. As to quaternary structure, homodimer or homotetramer. Mn(2+) is required as a cofactor.

It catalyses the reaction 2 superoxide + 2 H(+) = H2O2 + O2. Its activity is regulated as follows. Inhibited by hydrogen peroxide. Is resistant to cyanide and azide inhibition. In terms of biological role, destroys superoxide anion radicals which are normally produced within the cells and which are toxic to biological systems. The polypeptide is Superoxide dismutase [Mn] 1 (sod1) (Halobacterium salinarum (strain ATCC 700922 / JCM 11081 / NRC-1) (Halobacterium halobium)).